A 160-amino-acid polypeptide reads, in one-letter code: MGVTKKPDLSDPILRAKLAKGMGHNYYGEPAWPNDLLYIFPVVILGTIACTVGLAVLEPSMIGEPANPFATPLEILPEWYFFPVFQILRTVPNKLLGVLLMAAVPAGLLTVPFLENVNKFQNPFRRPVATTVFLIGTVVALWLGIGAALPIDKSLTLGLF.

3 consecutive transmembrane segments (helical) span residues 36–56 (LLYIFPVVILGTIACTVGLAV), 95–115 (LLGVLLMAAVPAGLLTVPFLE), and 131–151 (TVFLIGTVVALWLGIGAALPI).

It belongs to the cytochrome b family. PetD subfamily. As to quaternary structure, the 4 large subunits of the cytochrome b6-f complex are cytochrome b6, subunit IV (17 kDa polypeptide, petD), cytochrome f and the Rieske protein, while the 4 small subunits are petG, petL, petM and petN. The complex functions as a dimer.

The protein localises to the plastid. The protein resides in the chloroplast thylakoid membrane. Its function is as follows. Component of the cytochrome b6-f complex, which mediates electron transfer between photosystem II (PSII) and photosystem I (PSI), cyclic electron flow around PSI, and state transitions. This is Cytochrome b6-f complex subunit 4 from Marchantia polymorpha (Common liverwort).